Consider the following 156-residue polypeptide: Ribosomal RNA large subunit methyltransferase H (156 aa).

S-adenosyl-L-methionine is bound by residues L73, G104, and I123 to L128.

The protein belongs to the RNA methyltransferase RlmH family. In terms of assembly, homodimer.

It is found in the cytoplasm. It catalyses the reaction pseudouridine(1915) in 23S rRNA + S-adenosyl-L-methionine = N(3)-methylpseudouridine(1915) in 23S rRNA + S-adenosyl-L-homocysteine + H(+). Functionally, specifically methylates the pseudouridine at position 1915 (m3Psi1915) in 23S rRNA. In Herminiimonas arsenicoxydans, this protein is Ribosomal RNA large subunit methyltransferase H.